The following is a 695-amino-acid chain: Solute carrier family 53 member 1 (695 aa).

The Cytoplasmic portion of the chain corresponds to 1-228; sequence MKFAEHLSAH…RVPPLGAAQP (228 aa). The SPX domain maps to 2–224; that stretch reads KFAEHLSAHI…MKRLRVPPLG (223 aa). The interval 158 to 165 is important for inositol polyphosphate binding; that stretch reads KILKKHDK. A helical membrane pass occupies residues 229 to 259; it reads APAWTTFRVGLFCGIFIVLNITLVFAAVFKL. The Extracellular portion of the chain corresponds to 260-264; the sequence is ETDRT. Residues 265-296 traverse the membrane as a helical segment; that stretch reads VWPLIRIYRGGFLLIEFLFLLGINTYGWRQAG. The Cytoplasmic segment spans residues 297–309; sequence VNHVLIFELNPRN. A helical membrane pass occupies residues 310–337; that stretch reads NLSHQHLFEIAGFLGILWCLSLLACFFA. The Extracellular portion of the chain corresponds to 338–343; it reads PISIIP. A helical membrane pass occupies residues 344-365; that stretch reads IYVYPLALYGFMVFFLINPTKT. Residues 366 to 383 constitute an intramembrane region (helical); the sequence is FYYKSRFWLLKLLFRVFT. Residues 384-388 lie on the Cytoplasmic side of the membrane; that stretch reads APFHK. The discontinuously helical transmembrane segment at 389 to 422 threads the bilayer; sequence VGFADFWLADQLNSLSVILMDLEYMICFYSFELK. Phosphate contacts are provided by aspartate 398 and asparagine 401. Residues 423–429 are Extracellular-facing; that stretch reads WDESKGL. The discontinuously helical transmembrane segment at 430-471 threads the bilayer; it reads LPNDPQEPEFCHKYSYGVRAIVQCIPAWLRFIQCLRRYRDTR. Positions 439–642 constitute an EXS domain; sequence FCHKYSYGVR…LNADDQTLLE (204 aa). A topological domain (cytoplasmic) is located at residue arginine 472. The helical transmembrane segment at 473–503 threads the bilayer; the sequence is AFPHLVNAGKYSTTFFTVTFAALYSTHEEQN. Residues lysine 482 and tyrosine 483 each coordinate phosphate. Over 504–506 the chain is Extracellular; that stretch reads HSD. Residues 507–534 traverse the membrane as a helical segment; it reads TVVFFYLWVFFCIISSCYTLIWDLKMDW. At 535–553 the chain is on the cytoplasmic side; that stretch reads GLFDKNAGENTFLREEIVY. Residues 554–584 traverse the membrane as a discontinuously helical segment; it reads PQKAYYYCAIIEDVILRFAWTIQISITATFK. Arginine 570 is a binding site for phosphate. The Extracellular portion of the chain corresponds to 585 to 586; sequence PH. Residues 587-625 traverse the membrane as a helical segment; that stretch reads VGNIIATVFAPLEVFRRFVWNFFRLENEHLNNCGEFRAV. Positions 602 and 603 each coordinate phosphate. Topologically, residues 626 to 695 are cytoplasmic; sequence RDISVAPLNA…IEDTDDEANT (70 aa). Position 667 is a phosphoserine (serine 667). The tract at residues 671-695 is disordered; the sequence is PRLASQSKARDTKVLIEDTDDEANT. A Phosphothreonine modification is found at threonine 689.

It belongs to the SYG1 (TC 2.A.94) family. As to quaternary structure, homodimer. Expressed in pancreatic islets.

The protein resides in the cell membrane. It catalyses the reaction phosphate(in) = phosphate(out). Inorganic ion transporter that mediates phosphate ion export across plasma membrane. Plays a major role in phosphate homeostasis, preventing intracellular phosphate accumulation and possible calcium phosphate precipitation, ultimately preserving calcium signaling. Binds inositol hexakisphosphate (Ins6P) and similar inositol polyphosphates, such as 5-diphospho-inositol pentakisphosphate (5-InsP7), which are important intracellular signaling molecules involved in regulation of phosphate flux. Functionally, (Microbial infection) Receptor for xenotropic and polytropic murine leukemia (X- and P-MLV) retroviruses. Confers susceptibility to X- or P-MLV infection in vitro. This is Solute carrier family 53 member 1 from Mus musculus (Mouse).